The primary structure comprises 66 residues: Large ribosomal subunit protein bL35 (66 aa).

This sequence belongs to the bacterial ribosomal protein bL35 family.

The protein is Large ribosomal subunit protein bL35 of Ruegeria pomeroyi (strain ATCC 700808 / DSM 15171 / DSS-3) (Silicibacter pomeroyi).